Reading from the N-terminus, the 177-residue chain is R-phycoerythrin beta chain (177 aa).

Residues Cys50 and Cys61 each coordinate phycourobilin. Residue Asn72 is modified to N4-methylasparagine. The (2R,3E)-phycoerythrobilin site is built by Cys82 and Cys158.

The protein belongs to the phycobiliprotein family. As to quaternary structure, heterodimer of an alpha and a beta chain. Post-translationally, contains two covalently linked phycoerythrobilin chromophores and one covalently linked phycourobilin chromophore.

It localises to the plastid. It is found in the chloroplast thylakoid membrane. Functionally, light-harvesting photosynthetic bile pigment-protein from the phycobiliprotein complex. This is R-phycoerythrin beta chain (cpeB) from Pyropia haitanensis (Red seaweed).